Reading from the N-terminus, the 337-residue chain is Transcription initiation factor IIB (337 aa).

The TFIIB-type zinc finger occupies 36 to 68 (SVQSVCPECGSRQLVHDYERAELVCQNCGLVLD). Zn(2+)-binding residues include C41, C44, C60, and C63. 2 consecutive repeat copies span residues 154–237 (SELD…SREL) and 248–329 (DYVP…ELAE).

The protein belongs to the TFIIB family.

Stabilizes TBP binding to an archaeal box-A promoter. Also responsible for recruiting RNA polymerase II to the pre-initiation complex (DNA-TBP-TFIIB). This Methanoculleus marisnigri (strain ATCC 35101 / DSM 1498 / JR1) protein is Transcription initiation factor IIB.